We begin with the raw amino-acid sequence, 377 residues long: Meiotic driver cw9 (377 aa).

2 disordered regions span residues 1–49 (MKNK…DLNN) and 64–100 (NKSTTPPDYDENRLPITDEGNNPPNTHRENHSSGTTD). The span at 11 to 29 (SMDEMSAKNDNEIDLEKGP) shows a compositional bias: basic and acidic residues. 7 helical membrane-spanning segments follow: residues 105–125 (FLIKLLISFTSIILFNAPAVC), 142–162 (WTLFGFWCLVCTLALLFLTYF), 172–192 (VTIIFLAQCIKVTAVFLAQCV), 218–238 (VVIIWLLWVVICYTLFLRSKF), 252–272 (CSISAALLLFLLYVRLPFWTL), 276–296 (FSGLFQVLGVQSCVVIVTKGL), and 306–326 (ATGYEIEVSSLFVIGNFLFFY).

Belongs to the WTF family. As to quaternary structure, homomer. Forms protein aggregates. The two isoforms can interact with each other and with themselves. High sequence similarity is required for their interaction.

The protein resides in the spore membrane. It localises to the vacuole membrane. It is found in the ascus epiplasm. The protein localises to the cytoplasm. Its subcellular location is the endoplasmic reticulum membrane. Functionally, promotes unequal transmission of alleles from the parental zygote to progeny spores by acting as poison/antidote system where the poison and antidote proteins are produced from the same locus; the poison component is trans-acting and targets all spores within an ascus whereas the antidote component is spore-specific, leading to poisoning of all progeny that do not inherit the allele. Localizes isoform 2 to the vacuole thereby facilitating its degradation. In terms of biological role, forms toxic aggregates that disrupt spore maturation. This Schizosaccharomyces pombe (Fission yeast) protein is Meiotic driver cw9.